A 206-amino-acid chain; its full sequence is Large ribosomal subunit protein uL4 (206 aa).

The disordered stretch occupies residues methionine 63–glutamate 97. Residues tyrosine 64–alanine 77 are compositionally biased toward basic residues.

The protein belongs to the universal ribosomal protein uL4 family. As to quaternary structure, part of the 50S ribosomal subunit.

One of the primary rRNA binding proteins, this protein initially binds near the 5'-end of the 23S rRNA. It is important during the early stages of 50S assembly. It makes multiple contacts with different domains of the 23S rRNA in the assembled 50S subunit and ribosome. Its function is as follows. Forms part of the polypeptide exit tunnel. In Rhizobium etli (strain ATCC 51251 / DSM 11541 / JCM 21823 / NBRC 15573 / CFN 42), this protein is Large ribosomal subunit protein uL4.